A 231-amino-acid polypeptide reads, in one-letter code: 5'-methylthioadenosine/S-adenosylhomocysteine nucleosidase (231 aa).

The active-site Proton acceptor is the glutamate 12. Substrate contacts are provided by residues glycine 78, valine 153, and methionine 174–glutamate 175. Aspartate 198 serves as the catalytic Proton donor.

It belongs to the PNP/UDP phosphorylase family. MtnN subfamily.

It carries out the reaction S-adenosyl-L-homocysteine + H2O = S-(5-deoxy-D-ribos-5-yl)-L-homocysteine + adenine. It catalyses the reaction S-methyl-5'-thioadenosine + H2O = 5-(methylsulfanyl)-D-ribose + adenine. The catalysed reaction is 5'-deoxyadenosine + H2O = 5-deoxy-D-ribose + adenine. Its pathway is amino-acid biosynthesis; L-methionine biosynthesis via salvage pathway; S-methyl-5-thio-alpha-D-ribose 1-phosphate from S-methyl-5'-thioadenosine (hydrolase route): step 1/2. Its function is as follows. Catalyzes the irreversible cleavage of the glycosidic bond in both 5'-methylthioadenosine (MTA) and S-adenosylhomocysteine (SAH/AdoHcy) to adenine and the corresponding thioribose, 5'-methylthioribose and S-ribosylhomocysteine, respectively. Also cleaves 5'-deoxyadenosine, a toxic by-product of radical S-adenosylmethionine (SAM) enzymes, into 5-deoxyribose and adenine. This Vibrio atlanticus (strain LGP32) (Vibrio splendidus (strain Mel32)) protein is 5'-methylthioadenosine/S-adenosylhomocysteine nucleosidase.